We begin with the raw amino-acid sequence, 162 residues long: uncharacterized protein (162 aa).

Residues 5–25 (IIILFLFTAILCSITLCGCIS) form a helical membrane-spanning segment.

It localises to the membrane. This is an uncharacterized protein from Methanocaldococcus jannaschii (strain ATCC 43067 / DSM 2661 / JAL-1 / JCM 10045 / NBRC 100440) (Methanococcus jannaschii).